Reading from the N-terminus, the 214-residue chain is Large ribosomal subunit protein uL16 (214 aa).

Arg32 is modified (citrulline). Lys175 participates in a covalent cross-link: Glycyl lysine isopeptide (Lys-Gly) (interchain with G-Cter in SUMO2). Lys188 participates in a covalent cross-link: Glycyl lysine isopeptide (Lys-Gly) (interchain with G-Cter in ubiquitin).

Belongs to the universal ribosomal protein uL16 family. Component of the large ribosomal subunit. Mature ribosomes consist of a small (40S) and a large (60S) subunit. The 40S subunit contains about 33 different proteins and 1 molecule of RNA (18S). The 60S subunit contains about 49 different proteins and 3 molecules of RNA (28S, 5.8S and 5S). In terms of processing, citrullinated by PADI4. Ufmylated by UFL1.

The protein localises to the cytoplasm. Component of the large ribosomal subunit. Plays a role in the formation of actively translating ribosomes. May play a role in the embryonic brain development. This is Large ribosomal subunit protein uL16 from Bos taurus (Bovine).